The sequence spans 482 residues: MLNKDANGFQDLDPQYSFISKVHIIASKIKPEDDEKLHSILDESDIRDWESRKGLAKVLQFMERSWIETHKNLRALISKERPDFIFGDLLDQQACVDMRNEFNIPMAIHFGQMPFHLAPAKYIPGLPGFQQRYLTSEHASIWGRISEDFFALGLVFSLRHHFRWRKQMRDQAGAAPLAFSRKPDSLILVNTFFGFEPPKELPPLLVPVGPILSDNYSPLTPELESFLSTHKNVLYIAFGSHINLTGGSRFTKLFDGINSAIQSGFIDGVVWTLKPPKTSSSSSNPLPNFDPKFYHITPFAPQRAILAHPSTTLFLSHCGASSINEALFHGVPILGLPIYNDQFKYALCIENVGVGLKMDKTDFEAKEVHQKIGRMTTEPSFQQDSKRMMGIARIAARRKHLAADLIEEELLDHEGRFSLSSKSDVRHRRPPHLQTASARMSWFRAGNYDIYLVYALVLGSAWWIGKTILGTGIKLAMGKWLR.

Residue N243 is glycosylated (N-linked (GlcNAc...) asparagine). The helical transmembrane segment at 450-470 (IYLVYALVLGSAWWIGKTILG) threads the bilayer.

This sequence belongs to the glycosyltransferase 28 family.

It localises to the membrane. It catalyses the reaction exophillate aglycone + UDP-alpha-D-glucose = exophillate + UDP + H(+). It functions in the pathway secondary metabolite biosynthesis. Its function is as follows. Acts as a depside 2-O-glucosyltransferase that catalyzes the first glycosylation step during phaeomoniecin D biosynthesis by producing the intermediate exophillic acid which is further O-galactosylated into phaeomoniecin D by the C-galactosyltransferase OGT2. In Phaeomoniella chlamydospora (Phaeoacremonium chlamydosporum), this protein is UDP-glycosyltransferase 1.